The sequence spans 80 residues: MDSKREKQAAAQNAVDILHEISTILNCHLDRRTLSICISMIENGVSPEALASVVKELRKQGQEATAQIAQAGSAASSRRR.

The protein belongs to the MOZART1 family. In terms of assembly, part of the gamma-tubulin complex.

Its subcellular location is the cytoplasm. It is found in the cytoskeleton. It localises to the microtubule organizing center. The protein localises to the spindle pole body. Its function is as follows. Required for gamma-tubulin complex recruitment to the microtubule organizing center (MTOC). The protein is Mitotic-spindle organizing protein 1 of Pyricularia oryzae (strain 70-15 / ATCC MYA-4617 / FGSC 8958) (Rice blast fungus).